Reading from the N-terminus, the 152-residue chain is Small ribosomal subunit protein bS6 (152 aa).

The protein belongs to the bacterial ribosomal protein bS6 family.

Binds together with bS18 to 16S ribosomal RNA. The chain is Small ribosomal subunit protein bS6 from Bdellovibrio bacteriovorus (strain ATCC 15356 / DSM 50701 / NCIMB 9529 / HD100).